Consider the following 256-residue polypeptide: Gamma carbonic anhydrase-like 2, mitochondrial (256 aa).

A mitochondrion-targeting transit peptide spans 1-33 (MATSLARISKRSITSAVSSNLIRRYFAAEAVAV). Substrate contacts are provided by residues 103–105 (RGD) and 118–119 (QE). Histidine 124 provides a ligand contact to Zn(2+). Arginine 152, glutamine 164, and tyrosine 231 together coordinate substrate.

Belongs to the gamma-class carbonic anhydrase family. As to quaternary structure, component of the mitochondrial oxidoreductase respiratory chain complex I; element of the extra matrix-exposed domain, which is attached to the membrane arm of this complex. Interacts with GAMMACA2.

The protein localises to the mitochondrion membrane. Its function is as follows. Involved in complex I assembly in mitochondria and respiration. This is Gamma carbonic anhydrase-like 2, mitochondrial (GAMMACAL2) from Arabidopsis thaliana (Mouse-ear cress).